A 191-amino-acid polypeptide reads, in one-letter code: Lipid A acyltransferase PagP (191 aa).

A signal peptide spans 1–23; that stretch reads MRLFYQRISLLISLCGFFSAAWA. Active-site residues include His-62, Asp-105, and Ser-106.

Belongs to the lipid A palmitoyltransferase family. As to quaternary structure, homodimer.

It is found in the cell outer membrane. The catalysed reaction is a lipid A + a 1,2-diacyl-sn-glycero-3-phosphocholine = a hepta-acyl lipid A + a 2-acyl-sn-glycero-3-phosphocholine. The enzyme catalyses a lipid IVA + a 1,2-diacyl-sn-glycero-3-phosphocholine = a lipid IVB + a 2-acyl-sn-glycero-3-phosphocholine. It carries out the reaction a lipid IIA + a 1,2-diacyl-sn-glycero-3-phosphocholine = a lipid IIB + a 2-acyl-sn-glycero-3-phosphocholine. Transfers a fatty acid residue from the sn-1 position of a phospholipid to the N-linked hydroxyfatty acid chain on the proximal unit of lipid A or its precursors. The sequence is that of Lipid A acyltransferase PagP from Sodalis glossinidius (strain morsitans).